A 398-amino-acid polypeptide reads, in one-letter code: MAIISETSDDGSHGGVPNKKPEELHKNPKEDDHQEEEVENHPPIPRQIPQALIRRTVALIKRCHYPSLSLLSKAFRIVISSPELHQTRSSLNLTEPVLYALIGFPPHSFPNWFILNHNITRNIPLRLSAIGSLPPMNPGSAVVTIGYKMYVIGGLIGPNNPVKTVFVIDCRVHTCNYLPTMHRARYRAVAEVINGKIYVIGGCEKRYDDWIEVFDVVTGIWSTVPDRSHFMSSLPGGGFVTSVVMQNKIYILDATCGLVYDPIDGTWESGELGTTLKSYWYKPCCVIEDLLYSFDPYCLQGSPINVYDPNVMVWTPMMGTGIRAFPDLDYFECKMANFGGKLMVFGATYNNPVTDTWCIEMALIKGETGPILGMIDSMVPVLRSVYSPYIDLCRSVTF.

The tract at residues 1 to 46 (MAIISETSDDGSHGGVPNKKPEELHKNPKEDDHQEEEVENHPPIPR) is disordered. Over residues 19–32 (KKPEELHKNPKEDD) the composition is skewed to basic and acidic residues. One can recognise an F-box domain in the interval 43 to 90 (PIPRQIPQALIRRTVALIKRCHYPSLSLLSKAFRIVISSPELHQTRSS). 4 Kelch repeats span residues 148-195 (KMYV…VING), 196-241 (KIYV…GFVT), 243-289 (VVMQ…VIED), and 295-342 (DPYC…GGKL).

The sequence is that of Putative F-box/kelch-repeat protein At2g29780 from Arabidopsis thaliana (Mouse-ear cress).